The sequence spans 319 residues: Acetyl-coenzyme A carboxylase carboxyl transferase subunit alpha (319 aa).

The CoA carboxyltransferase C-terminal domain maps to 35–296; it reads DLDKELEQLE…KATLLRQLAD (262 aa).

It belongs to the AccA family. In terms of assembly, acetyl-CoA carboxylase is a heterohexamer composed of biotin carboxyl carrier protein (AccB), biotin carboxylase (AccC) and two subunits each of ACCase subunit alpha (AccA) and ACCase subunit beta (AccD).

The protein resides in the cytoplasm. The catalysed reaction is N(6)-carboxybiotinyl-L-lysyl-[protein] + acetyl-CoA = N(6)-biotinyl-L-lysyl-[protein] + malonyl-CoA. Its pathway is lipid metabolism; malonyl-CoA biosynthesis; malonyl-CoA from acetyl-CoA: step 1/1. Its function is as follows. Component of the acetyl coenzyme A carboxylase (ACC) complex. First, biotin carboxylase catalyzes the carboxylation of biotin on its carrier protein (BCCP) and then the CO(2) group is transferred by the carboxyltransferase to acetyl-CoA to form malonyl-CoA. This chain is Acetyl-coenzyme A carboxylase carboxyl transferase subunit alpha, found in Vibrio cholerae serotype O1 (strain ATCC 39541 / Classical Ogawa 395 / O395).